We begin with the raw amino-acid sequence, 233 residues long: LexA repressor (233 aa).

Residues 26 to 46 (FDEMKDALDLRSKSGIHRLIT) constitute a DNA-binding region (H-T-H motif). Active-site for autocatalytic cleavage activity residues include serine 154 and lysine 192.

This sequence belongs to the peptidase S24 family. Homodimer.

It catalyses the reaction Hydrolysis of Ala-|-Gly bond in repressor LexA.. In terms of biological role, represses a number of genes involved in the response to DNA damage (SOS response), including recA and lexA. In the presence of single-stranded DNA, RecA interacts with LexA causing an autocatalytic cleavage which disrupts the DNA-binding part of LexA, leading to derepression of the SOS regulon and eventually DNA repair. The chain is LexA repressor from Nitrobacter winogradskyi (strain ATCC 25391 / DSM 10237 / CIP 104748 / NCIMB 11846 / Nb-255).